A 330-amino-acid chain; its full sequence is Uroporphyrinogen decarboxylase (330 aa).

Substrate is bound by residues 10–14, phenylalanine 29, serine 59, aspartate 60, tyrosine 137, serine 192, and histidine 307; that span reads RQAGR.

This sequence belongs to the uroporphyrinogen decarboxylase family. In terms of assembly, homodimer.

It is found in the plastid. It localises to the chloroplast. It catalyses the reaction uroporphyrinogen III + 4 H(+) = coproporphyrinogen III + 4 CO2. It functions in the pathway porphyrin-containing compound metabolism; protoporphyrin-IX biosynthesis; coproporphyrinogen-III from 5-aminolevulinate: step 4/4. In terms of biological role, catalyzes the decarboxylation of four acetate groups of uroporphyrinogen-III to yield coproporphyrinogen-III. This chain is Uroporphyrinogen decarboxylase (DCUP), found in Hordeum vulgare (Barley).